A 122-amino-acid chain; its full sequence is Small ribosomal subunit protein bS16 (122 aa).

The tract at residues 87–122 (VGKAKQAEARKAGAKNVAKQAAEAKAEETPADNTEA) is disordered.

The protein belongs to the bacterial ribosomal protein bS16 family.

The chain is Small ribosomal subunit protein bS16 from Prochlorococcus marinus (strain MIT 9303).